The primary structure comprises 136 residues: MRHGKVHRKLNRTAEHRKAMFANMCAALIKHEQIVTTLPKAKELRPIVEKLVTLGKKGGLDKRRQAISEMRDLDQVRKLFGVLAPRYKDRNGGYTRIIKAGFRYGDNAPMAVIEFVDRDEDAKGKDSGPTQESEAA.

This sequence belongs to the bacterial ribosomal protein bL17 family. As to quaternary structure, part of the 50S ribosomal subunit. Contacts protein L32.

This Rhodopseudomonas palustris (strain BisB5) protein is Large ribosomal subunit protein bL17.